The following is a 159-amino-acid chain: Nucleotide-binding protein Pmen_0939 (159 aa).

It belongs to the YajQ family.

Nucleotide-binding protein. The sequence is that of Nucleotide-binding protein Pmen_0939 from Ectopseudomonas mendocina (strain ymp) (Pseudomonas mendocina).